Reading from the N-terminus, the 145-residue chain is 3-hydroxyacyl-[acyl-carrier-protein] dehydratase FabZ (145 aa).

Residue H47 is part of the active site.

The protein belongs to the thioester dehydratase family. FabZ subfamily.

The protein resides in the cytoplasm. It carries out the reaction a (3R)-hydroxyacyl-[ACP] = a (2E)-enoyl-[ACP] + H2O. In terms of biological role, involved in unsaturated fatty acids biosynthesis. Catalyzes the dehydration of short chain beta-hydroxyacyl-ACPs and long chain saturated and unsaturated beta-hydroxyacyl-ACPs. This is 3-hydroxyacyl-[acyl-carrier-protein] dehydratase FabZ from Vesicomyosocius okutanii subsp. Calyptogena okutanii (strain HA).